Reading from the N-terminus, the 171-residue chain is Flavodoxin (171 aa).

The region spanning 4–165 (IGIFFGSDTG…RIKQWVKQII (162 aa)) is the Flavodoxin-like domain.

Belongs to the flavodoxin family. It depends on FMN as a cofactor.

Low-potential electron donor to a number of redox enzymes. The chain is Flavodoxin (fldA) from Buchnera aphidicola subsp. Acyrthosiphon pisum (strain APS) (Acyrthosiphon pisum symbiotic bacterium).